Here is a 65-residue protein sequence, read N- to C-terminus: Prokaryotic ubiquitin-like protein Pup (65 aa).

The tract at residues 1–38 is disordered; it reads MANAQQQVFGGGGGDDAENNDAPQQGSGTQQVNVTGTD. The segment at 21-59 is ARC ATPase binding; the sequence is DAPQQGSGTQQVNVTGTDDLLDEIDGLLETNAEEFVRSY. Positions 22-34 are enriched in polar residues; that stretch reads APQQGSGTQQVNV. At Q65 the chain carries Deamidated glutamine. Q65 participates in a covalent cross-link: Isoglutamyl lysine isopeptide (Gln-Lys) (interchain with K-? in acceptor proteins).

This sequence belongs to the prokaryotic ubiquitin-like protein family. As to quaternary structure, strongly interacts with the proteasome-associated ATPase ARC through a hydrophobic interface; the interacting region of Pup lies in its C-terminal half. There is one Pup binding site per ARC hexamer ring. Post-translationally, is modified by deamidation of its C-terminal glutamine to glutamate by the deamidase Dop, a prerequisite to the subsequent pupylation process.

It functions in the pathway protein degradation; proteasomal Pup-dependent pathway. In terms of biological role, protein modifier that is covalently attached to lysine residues of substrate proteins, thereby targeting them for proteasomal degradation. The tagging system is termed pupylation. In Corynebacterium urealyticum (strain ATCC 43042 / DSM 7109), this protein is Prokaryotic ubiquitin-like protein Pup.